We begin with the raw amino-acid sequence, 136 residues long: Small ribosomal subunit protein uS19 (136 aa).

This sequence belongs to the universal ribosomal protein uS19 family.

Its function is as follows. Protein S19 forms a complex with S13 that binds strongly to the 16S ribosomal RNA. In Methanosarcina mazei (strain ATCC BAA-159 / DSM 3647 / Goe1 / Go1 / JCM 11833 / OCM 88) (Methanosarcina frisia), this protein is Small ribosomal subunit protein uS19.